Consider the following 78-residue polypeptide: Acyl carrier protein (78 aa).

The Carrier domain occupies Ser-2–Ser-77. Position 37 is an O-(pantetheine 4'-phosphoryl)serine (Ser-37).

It belongs to the acyl carrier protein (ACP) family. Post-translationally, 4'-phosphopantetheine is transferred from CoA to a specific serine of apo-ACP by AcpS. This modification is essential for activity because fatty acids are bound in thioester linkage to the sulfhydryl of the prosthetic group.

Its subcellular location is the cytoplasm. The protein operates within lipid metabolism; fatty acid biosynthesis. Carrier of the growing fatty acid chain in fatty acid biosynthesis. This is Acyl carrier protein from Bartonella quintana (strain Toulouse) (Rochalimaea quintana).